A 341-amino-acid polypeptide reads, in one-letter code: Phosphate acyltransferase (341 aa).

Belongs to the PlsX family. Homodimer. Probably interacts with PlsY.

The protein resides in the cytoplasm. The enzyme catalyses a fatty acyl-[ACP] + phosphate = an acyl phosphate + holo-[ACP]. It participates in lipid metabolism; phospholipid metabolism. Functionally, catalyzes the reversible formation of acyl-phosphate (acyl-PO(4)) from acyl-[acyl-carrier-protein] (acyl-ACP). This enzyme utilizes acyl-ACP as fatty acyl donor, but not acyl-CoA. The protein is Phosphate acyltransferase of Aliivibrio fischeri (strain ATCC 700601 / ES114) (Vibrio fischeri).